The sequence spans 987 residues: Eukaryotic translation initiation factor 3 subunit A (987 aa).

Positions 93-122 form a coiled coil; it reads LHLATDKAEQARSQADALEEALDVDDLEAD. The 198-residue stretch at 316–513 folds into the PCI domain; the sequence is LQLIASSVVL…GVVIFGNLGI (198 aa). Coiled coils occupy residues 556 to 742 and 797 to 858; these read TVEK…EKNR and LKIE…REEL. Over residues 808–859 the composition is skewed to basic and acidic residues; that stretch reads QEEEEARKQEEAERLKKVEAERKANLDKAFEKQRQREIELEEKSRREREELL. Residues 808–987 form a disordered region; it reads QEEEEARKQE…GSSRPRPTQR (180 aa). Residues 872-894 are compositionally biased toward low complexity; the sequence is PTVTPVGTTAPAAAAAAAGAPAA. Composition is skewed to polar residues over residues 905–916 and 976–987; these read TEVSGPSAPTSS and TFGSSRPRPTQR.

The protein belongs to the eIF-3 subunit A family. As to quaternary structure, component of the eukaryotic translation initiation factor 3 (eIF-3) complex. Binds to the translation initiation factor TIF3H1.

The protein localises to the cytoplasm. In terms of biological role, RNA-binding component of the eukaryotic translation initiation factor 3 (eIF-3) complex, which is involved in protein synthesis of a specialized repertoire of mRNAs and, together with other initiation factors, stimulates binding of mRNA and methionyl-tRNAi to the 40S ribosome. The eIF-3 complex specifically targets and initiates translation of a subset of mRNAs involved in cell proliferation. This Arabidopsis thaliana (Mouse-ear cress) protein is Eukaryotic translation initiation factor 3 subunit A (TIF3A1).